The sequence spans 219 residues: UPF0173 metal-dependent hydrolase LSL_0324 (219 aa).

The protein belongs to the UPF0173 family.

The sequence is that of UPF0173 metal-dependent hydrolase LSL_0324 from Ligilactobacillus salivarius (strain UCC118) (Lactobacillus salivarius).